A 1827-amino-acid polypeptide reads, in one-letter code: Laminin subunit beta-4 (1827 aa).

Residues 1-21 (MLLRLELSALLLLLIAAPVRL) form the signal peptide. The Laminin N-terminal domain occupies 26–266 (VGNSCYPNLG…ALYEMVVRGS (241 aa)). N-linked (GlcNAc...) asparagine glycosylation occurs at Asn-231. Disulfide bonds link Cys-267–Cys-276, Cys-269–Cys-297, Cys-299–Cys-308, Cys-311–Cys-331, Cys-334–Cys-343, Cys-336–Cys-361, Cys-364–Cys-373, Cys-376–Cys-394, Cys-397–Cys-410, Cys-399–Cys-417, Cys-419–Cys-428, Cys-431–Cys-446, Cys-449–Cys-463, Cys-451–Cys-470, Cys-472–Cys-481, Cys-484–Cys-498, Cys-501–Cys-513, Cys-503–Cys-520, and Cys-522–Cys-531. Laminin EGF-like domains follow at residues 267–333 (CFCN…VCKR), 334–396 (CNCH…ACIP), 397–448 (CDCD…GCQL), and 449–500 (CRCN…GCIP). The 44-residue stretch at 501–544 (CDCDIGGALKTECSSVDGQCKCRPNMVGQKCNDPAPGYFLAPLD) folds into the Laminin EGF-like 5; truncated domain. One can recognise a Laminin IV type B domain in the interval 540–847 (LAPLDFYIYE…LIGSMSAFIH (308 aa)). 32 cysteine pairs are disulfide-bonded: Cys-853-Cys-865, Cys-855-Cys-872, Cys-874-Cys-883, Cys-886-Cys-898, Cys-901-Cys-913, Cys-903-Cys-920, Cys-922-Cys-931, Cys-934-Cys-944, Cys-947-Cys-956, Cys-949-Cys-963, Cys-966-Cys-975, Cys-978-Cys-992, Cys-995-Cys-1011, Cys-997-Cys-1022, Cys-1024-Cys-1033, Cys-1036-Cys-1051, Cys-1054-Cys-1068, Cys-1056-Cys-1075, Cys-1078-Cys-1087, Cys-1090-Cys-1103, Cys-1106-Cys-1126, Cys-1108-Cys-1133, Cys-1135-Cys-1144, Cys-1147-Cys-1160, Cys-1163-Cys-1175, Cys-1165-Cys-1182, Cys-1184-Cys-1193, Cys-1196-Cys-1208, Cys-1211-Cys-1223, Cys-1213-Cys-1230, Cys-1232-Cys-1241, and Cys-1244-Cys-1255. 8 Laminin EGF-like domains span residues 853 to 900 (CNCH…GCSP), 901 to 946 (CDCD…LCRR), 947 to 994 (CQCN…PCEP), 995 to 1053 (CLCP…RCKE), 1054 to 1105 (CCCN…DCKE), 1106 to 1162 (CSCD…GCQP), 1163 to 1210 (CNCN…QCMF), and 1211 to 1257 (CDCN…ACEP). An N-linked (GlcNAc...) asparagine glycan is attached at Asn-1001. The segment at 1258-1449 (CHACNHLWEK…LSAANINEEV (192 aa)) is domain II. Coiled-coil stretches lie at residues 1294–1335 (ELQH…EIID) and 1385–1449 (NKIK…NEEV). Asn-1329 carries N-linked (GlcNAc...) asparagine glycosylation. The segment at 1450 to 1476 (CGAPGDAECEKAKCGGALCGKCGGPDC) is domain alpha. The segment at 1477-1827 (TGSLPISLNA…KVQRYNLCSP (351 aa)) is domain I. N-linked (GlcNAc...) asparagine glycosylation is found at Asn-1485, Asn-1496, Asn-1513, Asn-1533, Asn-1599, Asn-1629, Asn-1644, Asn-1672, Asn-1686, Asn-1702, Asn-1726, Asn-1745, Asn-1750, and Asn-1761. 2 coiled-coil regions span residues 1485-1554 (NASK…EKVK) and 1584-1820 (DEIK…DKVQ).

Laminin is a complex glycoprotein, consisting of three different polypeptide chains (alpha, beta, gamma), which are bound to each other by disulfide bonds into a cross-shaped molecule comprising one long and three short arms with globules at each end.

It is found in the secreted. It localises to the extracellular space. The protein localises to the extracellular matrix. The protein resides in the basement membrane. Functionally, binding to cells via a high affinity receptor, laminin is thought to mediate the attachment, migration and organization of cells into tissues during embryonic development by interacting with other extracellular matrix components. Positively regulates apical-basal distribution of Muller glia cells in the retina. The chain is Laminin subunit beta-4 (lamb4) from Danio rerio (Zebrafish).